We begin with the raw amino-acid sequence, 789 residues long: Phenylalanine--tRNA ligase beta subunit (789 aa).

In terms of domain architecture, tRNA-binding spans 38-151 (KKHLQSFVVV…NTYNVGESFF (114 aa)). Residues 398 to 474 (HNDILLNFSP…RLYGYDKILE (77 aa)) enclose the B5 domain. Mg(2+) is bound by residues aspartate 452, aspartate 458, glutamate 461, and glutamate 462. One can recognise an FDX-ACB domain in the interval 694–787 (LRYQSVKRDF…ISKGFNGILR (94 aa)).

This sequence belongs to the phenylalanyl-tRNA synthetase beta subunit family. Type 1 subfamily. As to quaternary structure, tetramer of two alpha and two beta subunits. The cofactor is Mg(2+).

It localises to the cytoplasm. It carries out the reaction tRNA(Phe) + L-phenylalanine + ATP = L-phenylalanyl-tRNA(Phe) + AMP + diphosphate + H(+). The protein is Phenylalanine--tRNA ligase beta subunit of Ehrlichia ruminantium (strain Gardel).